The sequence spans 293 residues: Germ cell-specific gene 1-like protein 2 (293 aa).

The Cytoplasmic segment spans residues 1–8; the sequence is MDRAKQQQ. The helical transmembrane segment at 9 to 29 threads the bilayer; the sequence is ALLLLPVCLALTFSLTAVVSS. Residues 30-120 are Extracellular-facing; the sequence is HWCEGTRRVV…RSVVPAEEQG (91 aa). Asn-59 and Asn-67 each carry an N-linked (GlcNAc...) asparagine glycan. Residues 121–141 form a helical membrane-spanning segment; it reads VLWLSIGGEVLDIVLILTSAI. At 142–160 the chain is on the cytoplasmic side; sequence LLGSRVSCRSPGFHWLRVD. Residues 161–181 traverse the membrane as a helical segment; sequence ALVAIFMVLAGLLGMVAHMMY. At 182–204 the chain is on the extracellular side; it reads TTIFQITVNLGPEDWKPQTWDYG. A helical membrane pass occupies residues 205–225; that stretch reads WSYCLAWGSFALCLAVSVSAM. The Cytoplasmic portion of the chain corresponds to 226–293; it reads SRFTAARLEF…PGAPGKVSIC (68 aa).

The protein belongs to the GSG1 family.

It localises to the membrane. This chain is Germ cell-specific gene 1-like protein 2, found in Homo sapiens (Human).